A 377-amino-acid polypeptide reads, in one-letter code: UPF0754 membrane protein lwe2241 (377 aa).

2 helical membrane-spanning segments follow: residues 1 to 21 and 357 to 377; these read MSVL…GAMT and YLGG…AIWI.

It belongs to the UPF0754 family.

The protein resides in the cell membrane. The chain is UPF0754 membrane protein lwe2241 from Listeria welshimeri serovar 6b (strain ATCC 35897 / DSM 20650 / CCUG 15529 / CIP 8149 / NCTC 11857 / SLCC 5334 / V8).